The sequence spans 536 residues: MRFGGQRRCIESSDDNDSIDSMSIQQKNKEKEEWKWAQSLARRLEQVLNVHPEKYQNGCSSQRPSRQPSPVEQLAPIRSHSADFGRAAEMASGNSEEGKGMLLRNGDDRIRLPSPQRGTPDTSSTQGHPYTDQIVTINVSGMRFQTFESTLSRYPNSLLGDRNKRQHFFVSDTNEFFFDRHRTTSSSFTFEIRNYLFESILYIYQSGGRVKRPEIVPIDIFLKEMRFFQMGDDLLEEFWIAEGYEKPKEVMMPNNKTQRKIWELMEYPDSSLSARIIAFISIAVIALSIISFCWETVPSDIEEKPINNSATAELLDEMDEKHYSPFFWIELMCILWFTIELILRFISCPCKVTFATSVLNIIDFVAIAPFFVNFFFADTSKSNSSMSFAVLRVLRLVRVFRVFKLSRHSVGLQILGKTFRSSVQEFCLLIFFMAIALVLFASGMYFAEQGEPNSKFTSIPASFWFVLVTMTTVGYGDLVPLSPFGKVVGGMCAMIGVLTLALPVPIIVANFKHFYRQENRLASMKSKGDDADDDIA.

Disordered regions lie at residues 1-31 (MRFG…NKEK) and 87-131 (AAEM…HPYT). The Cytoplasmic portion of the chain corresponds to 1 to 275 (MRFGGQRRCI…EYPDSSLSAR (275 aa)). Polar residues predominate over residues 116 to 131 (QRGTPDTSSTQGHPYT). Residues 276 to 296 (IIAFISIAVIALSIISFCWET) form a helical membrane-spanning segment. Residues 297 to 322 (VPSDIEEKPINNSATAELLDEMDEKH) are Extracellular-facing. Residues 323-343 (YSPFFWIELMCILWFTIELIL) traverse the membrane as a helical segment. The Cytoplasmic segment spans residues 344–356 (RFISCPCKVTFAT). A helical transmembrane segment spans residues 357–377 (SVLNIIDFVAIAPFFVNFFFA). The Extracellular portion of the chain corresponds to 378 to 425 (DTSKSNSSMSFAVLRVLRLVRVFRVFKLSRHSVGLQILGKTFRSSVQE). The helical; Voltage-sensor transmembrane segment at 426 to 446 (FCLLIFFMAIALVLFASGMYF) threads the bilayer. At 447–458 (AEQGEPNSKFTS) the chain is on the cytoplasmic side. Residues 459–479 (IPASFWFVLVTMTTVGYGDLV) traverse the membrane as a helical segment. Residues 480-486 (PLSPFGK) lie on the Extracellular side of the membrane. A helical membrane pass occupies residues 487–507 (VVGGMCAMIGVLTLALPVPII). Over 508–536 (VANFKHFYRQENRLASMKSKGDDADDDIA) the chain is Cytoplasmic.

This sequence belongs to the potassium channel family. A (Shaker) (TC 1.A.1.2) subfamily. Shaker sub-subfamily. As to expression, expressed in a variety of interneurons and sensory neurons, as well as body wall muscle.

It is found in the membrane. In terms of biological role, mediates the voltage-dependent potassium ion permeability of excitable membranes. Has an important role in repolarization and in regulating the pattern of action potential firing. Isoform a expresses currents in a more depolarized voltage range than isoform d. The chain is Potassium voltage-gated channel protein shk-1 from Caenorhabditis elegans.